Consider the following 764-residue polypeptide: 5-methyltetrahydropteroyltriglutamate--homocysteine methyltransferase (764 aa).

5-methyltetrahydropteroyltri-L-glutamate is bound by residues 16–19 (RELK) and Lys115. L-homocysteine-binding positions include 435-437 (IGS) and Glu488. Residues 435-437 (IGS) and Glu488 contribute to the L-methionine site. 5-methyltetrahydropteroyltri-L-glutamate is bound by residues 519–520 (RC) and Trp565. Asp603 contributes to the L-homocysteine binding site. Asp603 is a binding site for L-methionine. Residue Glu609 participates in 5-methyltetrahydropteroyltri-L-glutamate binding. Residues His645, Cys647, and Glu669 each coordinate Zn(2+). The active-site Proton donor is His698. Residue Cys730 participates in Zn(2+) binding.

It belongs to the vitamin-B12 independent methionine synthase family. Zn(2+) is required as a cofactor.

The enzyme catalyses 5-methyltetrahydropteroyltri-L-glutamate + L-homocysteine = tetrahydropteroyltri-L-glutamate + L-methionine. It participates in amino-acid biosynthesis; L-methionine biosynthesis via de novo pathway; L-methionine from L-homocysteine (MetE route): step 1/1. Its function is as follows. Catalyzes the transfer of a methyl group from 5-methyltetrahydrofolate to homocysteine resulting in methionine formation. This Burkholderia pseudomallei (strain 1106a) protein is 5-methyltetrahydropteroyltriglutamate--homocysteine methyltransferase.